A 417-amino-acid chain; its full sequence is CinA-like protein (417 aa).

Belongs to the CinA family.

The protein is CinA-like protein of Gloeothece citriformis (strain PCC 7424) (Cyanothece sp. (strain PCC 7424)).